The sequence spans 75 residues: Large ribosomal subunit protein bL31 (75 aa).

Residues Cys16, Cys18, Cys37, and Cys40 each coordinate Zn(2+).

It belongs to the bacterial ribosomal protein bL31 family. Type A subfamily. In terms of assembly, part of the 50S ribosomal subunit. It depends on Zn(2+) as a cofactor.

Binds the 23S rRNA. The chain is Large ribosomal subunit protein bL31 from Baumannia cicadellinicola subsp. Homalodisca coagulata.